Reading from the N-terminus, the 536-residue chain is Chaperonin GroEL (536 aa).

Residues 30–33 (TLGP), 86–90 (DGTTT), Gly414, and Asp494 each bind ATP.

It belongs to the chaperonin (HSP60) family. In terms of assembly, forms a cylinder of 14 subunits composed of two heptameric rings stacked back-to-back. Interacts with the co-chaperonin GroES.

Its subcellular location is the cytoplasm. It catalyses the reaction ATP + H2O + a folded polypeptide = ADP + phosphate + an unfolded polypeptide.. Together with its co-chaperonin GroES, plays an essential role in assisting protein folding. The GroEL-GroES system forms a nano-cage that allows encapsulation of the non-native substrate proteins and provides a physical environment optimized to promote and accelerate protein folding. This chain is Chaperonin GroEL, found in Methanosarcina barkeri (strain Fusaro / DSM 804).